A 334-amino-acid chain; its full sequence is Trans-O-hydroxybenzylidenepyruvate hydratase-aldolase (334 aa).

The protein belongs to the DapA family.

The enzyme catalyses (3E)-4-(2-hydroxyphenyl)-2-oxobut-3-enoate + H2O = salicylaldehyde + pyruvate. It functions in the pathway aromatic compound metabolism; naphthalene degradation. Involved in the naphthalene upper catabolic pathway. Catalyzes the transformation of trans-O-hydroxybenzylidenepyruvate (THBPA) to salicylaldehyde and pyruvate. The reaction is reversible. This chain is Trans-O-hydroxybenzylidenepyruvate hydratase-aldolase (pahE), found in Pseudomonas aeruginosa.